We begin with the raw amino-acid sequence, 225 residues long: Cell division protein SepF (225 aa).

The interval 21–134 (DEYLDEPEPT…GPLFDEGGPL (114 aa)) is disordered. Composition is skewed to basic and acidic residues over residues 28–54 (EPTR…RDFA), 77–86 (RYESPRHSSR), and 115–127 (TRSD…RGPL).

The protein belongs to the SepF family. Homodimer. Interacts with FtsZ.

The protein resides in the cytoplasm. Functionally, cell division protein that is part of the divisome complex and is recruited early to the Z-ring. Probably stimulates Z-ring formation, perhaps through the cross-linking of FtsZ protofilaments. Its function overlaps with FtsA. The polypeptide is Cell division protein SepF (Rhodococcus opacus (strain B4)).